Reading from the N-terminus, the 334-residue chain is N-acetyl-gamma-glutamyl-phosphate reductase (334 aa).

Cysteine 154 is a catalytic residue.

Belongs to the NAGSA dehydrogenase family. Type 1 subfamily.

The protein localises to the cytoplasm. The catalysed reaction is N-acetyl-L-glutamate 5-semialdehyde + phosphate + NADP(+) = N-acetyl-L-glutamyl 5-phosphate + NADPH + H(+). Its pathway is amino-acid biosynthesis; L-arginine biosynthesis; N(2)-acetyl-L-ornithine from L-glutamate: step 3/4. In terms of biological role, catalyzes the NADPH-dependent reduction of N-acetyl-5-glutamyl phosphate to yield N-acetyl-L-glutamate 5-semialdehyde. This chain is N-acetyl-gamma-glutamyl-phosphate reductase, found in Yersinia pseudotuberculosis serotype I (strain IP32953).